The chain runs to 284 residues: Two-pore potassium channel 4 (284 aa).

The disordered stretch occupies residues 1 to 21 (MEEENLLNENLLHPNESSPEE). Residues 1–31 (MEEENLLNENLLHPNESSPEETQVTTVSKSK) are Cytoplasmic-facing. A helical transmembrane segment spans residues 32–52 (WTILVLAMILLLVYLTFGVCT). Positions 70–89 (DAFYFSIVTFSTVGYGDIVP) form an intramembrane region, pore-forming. A helical membrane pass occupies residues 93 to 113 (TTKILTIVLVSTGVVFLDYLL). The Cytoplasmic segment spans residues 114-156 (NRVVSHVLSLQENAILDRINKTRNRAIRDHIAEDGKIRLKWKL). Residues 157 to 177 (CLAFCAVGLCVGSGALFLHVF) form a helical membrane-spanning segment. The pore-forming intramembrane region spans 184 to 203 (DSVYLSVISVTTVGYGDKTF). The chain crosses the membrane as a helical span at residues 211–231 (FAVFWLLLSTIAMATLFLYLA). The Cytoplasmic portion of the chain corresponds to 232-284 (EMRIDRTTVMKLPPSESEFIVFKLRESGRISEDDIKQIVREFENLEEVPSSGS).

It belongs to the two pore domain potassium channel (TC 1.A.1.7) family. Homodimer. In terms of tissue distribution, predominantly expressed in pollen.

The protein localises to the cell membrane. Its function is as follows. Voltage-independent, instantaneously activating, potassium-selective plasma membrane ion channel. Open rectifier. Regulated by cytoplasmic pH and extra-cellular calcium. Has some permeability for Rb(+) and NH(4)(+), but none for Na(+) or Li(+). In Arabidopsis thaliana (Mouse-ear cress), this protein is Two-pore potassium channel 4 (TPK4).